The chain runs to 99 residues: Putative pterin-4-alpha-carbinolamine dehydratase (99 aa).

This sequence belongs to the pterin-4-alpha-carbinolamine dehydratase family.

It catalyses the reaction (4aS,6R)-4a-hydroxy-L-erythro-5,6,7,8-tetrahydrobiopterin = (6R)-L-erythro-6,7-dihydrobiopterin + H2O. This is Putative pterin-4-alpha-carbinolamine dehydratase from Bradyrhizobium sp. (strain BTAi1 / ATCC BAA-1182).